Reading from the N-terminus, the 186-residue chain is Tumor necrosis factor alpha-induced protein 8-like protein 1 (186 aa).

The protein belongs to the TNFAIP8 family. In terms of assembly, interacts with FBXW5; TNFAIP8L1 competes with TSC2 to bind FBXW5 increasing TSC2 stability by preventing its ubiquitination. In terms of tissue distribution, high expression detected in most carcinoma cell lines, especially in cells transformed with virus genomes.

It is found in the cytoplasm. In terms of biological role, acts as a negative regulator of mTOR activity. This is Tumor necrosis factor alpha-induced protein 8-like protein 1 (TNFAIP8L1) from Homo sapiens (Human).